The chain runs to 158 residues: S-ribosylhomocysteine lyase (158 aa).

Residues histidine 54, histidine 58, and cysteine 124 each coordinate Fe cation.

The protein belongs to the LuxS family. Homodimer. It depends on Fe cation as a cofactor.

The catalysed reaction is S-(5-deoxy-D-ribos-5-yl)-L-homocysteine = (S)-4,5-dihydroxypentane-2,3-dione + L-homocysteine. In terms of biological role, involved in the synthesis of autoinducer 2 (AI-2) which is secreted by bacteria and is used to communicate both the cell density and the metabolic potential of the environment. The regulation of gene expression in response to changes in cell density is called quorum sensing. Catalyzes the transformation of S-ribosylhomocysteine (RHC) to homocysteine (HC) and 4,5-dihydroxy-2,3-pentadione (DPD). The sequence is that of S-ribosylhomocysteine lyase from Lactobacillus gasseri (strain ATCC 33323 / DSM 20243 / BCRC 14619 / CIP 102991 / JCM 1131 / KCTC 3163 / NCIMB 11718 / NCTC 13722 / AM63).